We begin with the raw amino-acid sequence, 716 residues long: Putative cuticle collagen 99 (716 aa).

Disordered stretches follow at residues 85–122 (LPSS…PVGP) and 183–472 (PPGP…SLVA). Triple-helical region regions lie at residues 179-238 (GMPG…KGDR), 265-298 (LPGP…FDGE), and 302-330 (GPKG…EKGD). A compositionally biased stretch (pro residues) spans 266 to 277 (PGPPGPPGPPGP). The span at 280-290 (RDGRHGLKGDR) shows a compositional bias: basic and acidic residues. Residues 349 to 358 (PGPPGPPGPP) are compositionally biased toward pro residues. Triple-helical region stretches follow at residues 385 to 411 (GPPG…AGAA) and 422 to 467 (GPPG…GRHG). The span at 389–401 (EKGERGERGEPGD) shows a compositional bias: basic and acidic residues. A compositionally biased stretch (low complexity) spans 402–422 (RGLPGAAGAANLLNGGKALVG). Residues 429–444 (RDGRPGDKGEKGEQGL) show a composition bias toward basic and acidic residues. The N-linked (GlcNAc...) asparagine glycan is linked to N474. The interval 503–716 (KNVIPGPPGP…GAETRPPVTD (214 aa)) is disordered. 3 triple-helical region regions span residues 507 to 557 (PGPP…QPGA), 566 to 603 (GPRG…PPGP), and 605 to 664 (GLRG…PGLD). A compositionally biased stretch (pro residues) spans 568-577 (RGPPGLPGPP).

Belongs to the cuticular collagen family. In terms of assembly, collagen polypeptide chains are complexed within the cuticle by disulfide bonds and other types of covalent cross-links.

Its function is as follows. Nematode cuticles are composed largely of collagen-like proteins. The cuticle functions both as an exoskeleton and as a barrier to protect the worm from its environment. The sequence is that of Putative cuticle collagen 99 (col-99) from Caenorhabditis elegans.